The sequence spans 448 residues: Phosphohexose mutases (448 aa).

Ser97 functions as the Phosphoserine intermediate in the catalytic mechanism. Mg(2+) is bound by residues Ser97, Asp237, Asp239, and Asp241.

This sequence belongs to the phosphohexose mutase family. It depends on Mg(2+) as a cofactor.

The enzyme catalyses alpha-D-glucose 1-phosphate = alpha-D-glucose 6-phosphate. The catalysed reaction is alpha-D-mannose 1-phosphate = D-mannose 6-phosphate. Its pathway is nucleotide-sugar biosynthesis; GDP-alpha-D-mannose biosynthesis; alpha-D-mannose 1-phosphate from D-fructose 6-phosphate: step 2/2. In terms of biological role, involved in xanthan production. The chain is Phosphohexose mutases (xanA) from Xanthomonas campestris pv. campestris (strain B100).